Reading from the N-terminus, the 139-residue chain is ATP synthase epsilon chain (139 aa).

This sequence belongs to the ATPase epsilon chain family. F-type ATPases have 2 components, CF(1) - the catalytic core - and CF(0) - the membrane proton channel. CF(1) has five subunits: alpha(3), beta(3), gamma(1), delta(1), epsilon(1). CF(0) has three main subunits: a, b and c.

It localises to the cell membrane. Produces ATP from ADP in the presence of a proton gradient across the membrane. This chain is ATP synthase epsilon chain, found in Streptococcus pneumoniae serotype 2 (strain D39 / NCTC 7466).